The chain runs to 502 residues: 4,4'-diaponeurosporene oxygenase (502 aa).

8-20 (IIGGGLGGISAAI) provides a ligand contact to FAD.

This sequence belongs to the carotenoid/retinoid oxidoreductase family. CrtP subfamily. The cofactor is FAD.

It catalyses the reaction all-trans-4,4'-diaponeurosporene + 2 AH2 + 2 O2 = 4,4'-diaponeurosporenal + 2 A + 3 H2O. It participates in carotenoid biosynthesis; staphyloxanthin biosynthesis; staphyloxanthin from farnesyl diphosphate: step 3/5. Its function is as follows. Involved in the biosynthesis of the yellow-orange carotenoid staphyloxanthin, which plays a role in the virulence via its protective function against oxidative stress. Catalyzes the oxidation of the terminal methyl side group of 4,4'-diaponeurosporene to form 4,4'-diaponeurosporen-4-al. The sequence is that of 4,4'-diaponeurosporene oxygenase from Staphylococcus haemolyticus (strain JCSC1435).